The primary structure comprises 454 residues: MKTIIEPFRIKSVEPIRLTSRPERERLARAAGYNLFGLHSDDVLIDLLTDSGTGAMSSLQWAAVMQGDESYAGSPSFFRFEAAVQNLMPFKHIIPTHQGRAAEAILFSIFGGKGRRIPSNTHFDTTRGNIEASGATGDDLVIAEGKDPQNLHPFKGNMDLARLEAYLEAHHAEVPLVMITITNNAGGGQPVSLANIRAVADLAHRYGKPFVIDGCRFAENAWFIKTREEGQADRSIPEIVRDCFAVADGMTMSAKKDAFGNIGGWLALNDDDLAEEARGHLIRTEGFPTYGGLAGRDLDALAQGLVEIVDEDYLRYRIRTHQYIVERLDAMGVPVVKPAGGHAVFIDARAWLSHIPPLEYPGQALAVALYEIAGVRSCEIGTAMFGRQPDGSEKPAAMDLVRLAFPRRTYTQSHADYIVEAFEELAATKDALRGYRIVKEPKLMRHFTCRFEKL.

Lys256 is subject to N6-(pyridoxal phosphate)lysine.

It belongs to the beta-eliminating lyase family. Homotetramer. The cofactor is pyridoxal 5'-phosphate.

The enzyme catalyses L-tryptophan + H2O = indole + pyruvate + NH4(+). Its pathway is amino-acid degradation; L-tryptophan degradation via pyruvate pathway; indole and pyruvate from L-tryptophan: step 1/1. This chain is Tryptophanase (tnaA), found in Rhodobacter capsulatus (Rhodopseudomonas capsulata).